The chain runs to 968 residues: MPFTLGQRWISDTESELGLGTVVAMDARTVTLLFPSTGENRLYARSDSPVTRVMFNPGDTITSHEGWQLHIDEVKEENGLLVYVGTRLDTEETNVTLREVLLDSKLVFSKPQDRLFAGQIDRMDRFALRYRARKFQSEQYRMPYSGLRGQRTNLIPHQLNIAHDVGRRHAPRVLLADEVGLGKTIEAGMILHQQLLSGAAERVLIIVPETLQHQWLVEMLRRFNLRFALFDDERYTEAQHDAYNPFETEQLVICSLDFARRNKQRLEHLCDAEWDLLVVDEAHHLVWSTDAPSREYMAIEQLAERVPGVLLLTATPEQLGMESHFARLRLLDPNRFHDFEQFVEEQKNYRPVADAVAMLLAGNKLSNDELNRLGDLIGEQDIEPLLQAANSDRDDAQAARDELVSMLMDRHGTSRVLFRNTRNGVKGFPKRELHTVKLPLPTQYQTAIKVSGIMGARKSPEDRARDMLYPEQIYQEFEGDTGTWWNFDPRVEWLMGYLTSHRSQKVLVICAKATTALQLEQVLREREGIRAAVFHEGMSIIERDRAAAWFAEEDTGAQVLLCSEIGSEGRNFQFASNLVMFDLPFNPDLLEQRIGRLDRIGQAHDIQIHVPYLEKTAQSVLVRWYHEGLDAFEHTCPTGRAIYDSAYASLINYLAAPEETDGFDDLIKSCREQHEALKAQLEQGRDRLLEIHSNGGEKAQQLAQSIEEQDDDTNLIAFAMNLFDIVGINQDDRGDNLIVLTPSDHMLVPDFPGLPEDGCTITFERDVALSREDAQFITWEHPLIRNGLDLILSGDTGSSTISLLKNKALPVGTLLVELVYVVEAQAPKQLQLNRFLPPTPVRMLLDKNGNNLAAQVEFETFNRQLSAVNRHTGSKLVNAVQQDVHAILQLGETQIEKSARALIDNARREADEKLSGELSRLEALRAVNPNIRDDELAAIDSNRQQVLESLNQAGWRLDALRLIVVTHQ.

The region spanning aspartate 164–asparagine 334 is the Helicase ATP-binding domain. Aspartate 177–threonine 184 contributes to the ATP binding site. The DEAH box motif lies at aspartate 280 to histidine 283. The 196-residue stretch at arginine 490–arginine 685 folds into the Helicase C-terminal domain.

It belongs to the SNF2/RAD54 helicase family. RapA subfamily. As to quaternary structure, interacts with the RNAP. Has a higher affinity for the core RNAP than for the holoenzyme. Its ATPase activity is stimulated by binding to RNAP.

In terms of biological role, transcription regulator that activates transcription by stimulating RNA polymerase (RNAP) recycling in case of stress conditions such as supercoiled DNA or high salt concentrations. Probably acts by releasing the RNAP, when it is trapped or immobilized on tightly supercoiled DNA. Does not activate transcription on linear DNA. Probably not involved in DNA repair. This is RNA polymerase-associated protein RapA from Salmonella typhimurium (strain LT2 / SGSC1412 / ATCC 700720).